The primary structure comprises 170 residues: Small ribosomal subunit protein bS18c (170 aa).

Disordered regions lie at residues 1–59 (MYIS…IGPG) and 151–170 (NLRNSNQNLRNNNRNLSSDC). 7 repeats span residues 4-10 (SKQPFRK), 11-17 (SKQPFRK), 18-24 (SKQTFHK), 25-31 (SKQPFRK), 32-38 (FKQPFRK), 39-45 (SKQPFRK), and 46-52 (SKQPFRR). The 7 X 7 AA tandem repeats stretch occupies residues 4–52 (SKQPFRKSKQPFRKSKQTFHKSKQPFRKFKQPFRKSKQPFRKSKQPFRR). A compositionally biased stretch (basic residues) spans 7 to 55 (PFRKSKQPFRKSKQTFHKSKQPFRKFKQPFRKSKQPFRKSKQPFRRRSR).

Belongs to the bacterial ribosomal protein bS18 family. As to quaternary structure, part of the 30S ribosomal subunit.

The protein localises to the plastid. Its subcellular location is the chloroplast. The chain is Small ribosomal subunit protein bS18c (rps18) from Zea mays (Maize).